The following is a 156-amino-acid chain: MTTKKQPDSTIALNRKAGFDYFIEDQYEAGLVLEGWEVKSLRAGKINLSDSHVIIKYGEAFLLGAQIQPLPTASTHFIPDPIRTRKLLMNKKELNHLIGSVERQGYTIVPLSLYWKKNKIKIKIALAKGKKEHDKRDTIKDREWQRDRSRIMKKNT.

Positions Lys135–Arg150 are enriched in basic and acidic residues. A disordered region spans residues Lys135–Thr156.

Belongs to the SmpB family.

The protein localises to the cytoplasm. Its function is as follows. Required for rescue of stalled ribosomes mediated by trans-translation. Binds to transfer-messenger RNA (tmRNA), required for stable association of tmRNA with ribosomes. tmRNA and SmpB together mimic tRNA shape, replacing the anticodon stem-loop with SmpB. tmRNA is encoded by the ssrA gene; the 2 termini fold to resemble tRNA(Ala) and it encodes a 'tag peptide', a short internal open reading frame. During trans-translation Ala-aminoacylated tmRNA acts like a tRNA, entering the A-site of stalled ribosomes, displacing the stalled mRNA. The ribosome then switches to translate the ORF on the tmRNA; the nascent peptide is terminated with the 'tag peptide' encoded by the tmRNA and targeted for degradation. The ribosome is freed to recommence translation, which seems to be the essential function of trans-translation. This chain is SsrA-binding protein, found in Legionella pneumophila (strain Corby).